Reading from the N-terminus, the 224-residue chain is 7-cyano-7-deazaguanine synthase (224 aa).

9–19 (ISGGMDSTLCA) lines the ATP pocket. Zn(2+) is bound by residues Cys190, Cys198, Cys201, and Cys204.

The protein belongs to the QueC family. Requires Zn(2+) as cofactor.

It catalyses the reaction 7-carboxy-7-deazaguanine + NH4(+) + ATP = 7-cyano-7-deazaguanine + ADP + phosphate + H2O + H(+). It functions in the pathway purine metabolism; 7-cyano-7-deazaguanine biosynthesis. In terms of biological role, catalyzes the ATP-dependent conversion of 7-carboxy-7-deazaguanine (CDG) to 7-cyano-7-deazaguanine (preQ(0)). The sequence is that of 7-cyano-7-deazaguanine synthase from Campylobacter jejuni subsp. doylei (strain ATCC BAA-1458 / RM4099 / 269.97).